A 345-amino-acid polypeptide reads, in one-letter code: Phosphoribosylformylglycinamidine cyclo-ligase (345 aa).

It belongs to the AIR synthase family.

It is found in the cytoplasm. It carries out the reaction 2-formamido-N(1)-(5-O-phospho-beta-D-ribosyl)acetamidine + ATP = 5-amino-1-(5-phospho-beta-D-ribosyl)imidazole + ADP + phosphate + H(+). Its pathway is purine metabolism; IMP biosynthesis via de novo pathway; 5-amino-1-(5-phospho-D-ribosyl)imidazole from N(2)-formyl-N(1)-(5-phospho-D-ribosyl)glycinamide: step 2/2. This Shewanella loihica (strain ATCC BAA-1088 / PV-4) protein is Phosphoribosylformylglycinamidine cyclo-ligase.